We begin with the raw amino-acid sequence, 704 residues long: PHD finger protein MALE MEIOCYTE DEATH 1 (704 aa).

The PHD-type zinc finger occupies 606-656 (MVKCICRARDDDGERMISCDVCEVWQHTRCCGIDDSDTLPPLFVCSNCCEE). Residues Cys609, Cys611, Cys624, Cys627, His632, Cys635, Cys650, and Cys653 each coordinate Zn(2+).

Interacts with JMJ16 in the nucleus of male meiocytes, especially on pachytene chromosomes. As to expression, expressed in inflorescence, specifically in male meiocytes.

The protein resides in the nucleus. In terms of biological role, probable transcription factor required for chromosome organization and progression during male meiosis (e.g. microsporogenesis). Necessary for fertility and meiotic progressive compaction of prophase I chromosomes to metaphase I bivalents. Together with JMJ16, promotes gene expression in male meiocytes in an H3K9me3-dependent manner, and contributes to meiotic chromosome condensation by triggering some condensin promoters (e.g. CAP-D3 and CAP-H). The protein is PHD finger protein MALE MEIOCYTE DEATH 1 of Arabidopsis thaliana (Mouse-ear cress).